Reading from the N-terminus, the 287-residue chain is Pyridoxal kinase PdxY (287 aa).

Residues Ser-10 and 45–46 (TQ) each bind substrate. ATP-binding positions include Asp-112, Ala-144, Glu-149, Lys-182, and 209–212 (RPLV). Asp-224 is a binding site for substrate.

It belongs to the pyridoxine kinase family. PdxY subfamily. In terms of assembly, homodimer. Mg(2+) is required as a cofactor.

The catalysed reaction is pyridoxal + ATP = pyridoxal 5'-phosphate + ADP + H(+). Its pathway is cofactor metabolism; pyridoxal 5'-phosphate salvage; pyridoxal 5'-phosphate from pyridoxal: step 1/1. Pyridoxal kinase involved in the salvage pathway of pyridoxal 5'-phosphate (PLP). Catalyzes the phosphorylation of pyridoxal to PLP. The polypeptide is Pyridoxal kinase PdxY (Escherichia coli O157:H7).